Consider the following 1155-residue polypeptide: DNA-directed RNA polymerase subunit beta (1155 aa).

It belongs to the RNA polymerase beta chain family. As to quaternary structure, the RNAP catalytic core consists of 2 alpha, 1 beta, 1 beta' and 1 omega subunit. When a sigma factor is associated with the core the holoenzyme is formed, which can initiate transcription.

The enzyme catalyses RNA(n) + a ribonucleoside 5'-triphosphate = RNA(n+1) + diphosphate. DNA-dependent RNA polymerase catalyzes the transcription of DNA into RNA using the four ribonucleoside triphosphates as substrates. The polypeptide is DNA-directed RNA polymerase subunit beta (Borreliella afzelii (strain PKo) (Borrelia afzelii)).